A 322-amino-acid chain; its full sequence is HPr kinase/phosphorylase (322 aa).

Catalysis depends on residues histidine 146 and lysine 167. Position 161-168 (161-168) interacts with ATP; the sequence is GDSGLGKS. Serine 168 contributes to the Mg(2+) binding site. Aspartate 185 acts as the Proton acceptor; for phosphorylation activity. Proton donor; for dephosphorylation activity in catalysis. An important for the catalytic mechanism of both phosphorylation and dephosphorylation region spans residues 209-218; sequence LEVRGLGLLD. Residue glutamate 210 participates in Mg(2+) binding. The active site involves arginine 250. Positions 271 to 276 are important for the catalytic mechanism of dephosphorylation; that stretch reads QVAAGR.

It belongs to the HPrK/P family. Homohexamer. Requires Mg(2+) as cofactor.

The enzyme catalyses [HPr protein]-L-serine + ATP = [HPr protein]-O-phospho-L-serine + ADP + H(+). The catalysed reaction is [HPr protein]-O-phospho-L-serine + phosphate + H(+) = [HPr protein]-L-serine + diphosphate. Its function is as follows. Catalyzes the ATP- as well as the pyrophosphate-dependent phosphorylation of a specific serine residue in HPr, a phosphocarrier protein of the phosphoenolpyruvate-dependent sugar phosphotransferase system (PTS). HprK/P also catalyzes the pyrophosphate-producing, inorganic phosphate-dependent dephosphorylation (phosphorolysis) of seryl-phosphorylated HPr (P-Ser-HPr). The sequence is that of HPr kinase/phosphorylase from Burkholderia multivorans (strain ATCC 17616 / 249).